The sequence spans 341 residues: tRNA N6-adenosine threonylcarbamoyltransferase (341 aa).

2 residues coordinate Fe cation: His-115 and His-119. Residues 137-141, Asp-170, Gly-183, Asp-187, and Asn-276 each bind substrate; that span reads IVSGG. Asp-304 is a Fe cation binding site.

The protein belongs to the KAE1 / TsaD family. It depends on Fe(2+) as a cofactor.

It is found in the cytoplasm. The enzyme catalyses L-threonylcarbamoyladenylate + adenosine(37) in tRNA = N(6)-L-threonylcarbamoyladenosine(37) in tRNA + AMP + H(+). Required for the formation of a threonylcarbamoyl group on adenosine at position 37 (t(6)A37) in tRNAs that read codons beginning with adenine. Is involved in the transfer of the threonylcarbamoyl moiety of threonylcarbamoyl-AMP (TC-AMP) to the N6 group of A37, together with TsaE and TsaB. TsaD likely plays a direct catalytic role in this reaction. The sequence is that of tRNA N6-adenosine threonylcarbamoyltransferase from Staphylococcus aureus (strain MRSA252).